The sequence spans 471 residues: Variant surface glycoprotein ILTAT 1.1BC (471 aa).

The first 21 residues, 1–21, serve as a signal peptide directing secretion; that stretch reads MVKAIASLMLLHIWAIEEIKA. Residue Asn130 is glycosylated (N-linked (GlcNAc...) asparagine). A compositionally biased stretch (polar residues) spans 158–168; that stretch reads TVSKTTECNTE. 2 disordered regions span residues 158 to 183 and 204 to 232; these read TVSK…TLSK and GGAC…TTAS. Positions 214 to 226 are enriched in basic and acidic residues; the sequence is DKIHITNETDSKN. Asn220 and Asn260 each carry an N-linked (GlcNAc...) asparagine glycan. Intrachain disulfides connect Cys397–Cys410 and Cys406–Cys421. The disordered stretch occupies residues 432 to 454; it reads AEQAATNQETEGKDGKTTNTTGS. N-linked (GlcNAc...) asparagine glycosylation is present at Asn450. Ser454 carries GPI-anchor amidated serine lipidation. A propeptide spans 455 to 471 (removed in mature form); that stretch reads NSFLINKAPVLLAFLLL.

The protein localises to the cell membrane. VSG forms a coat on the surface of the parasite. The trypanosome evades the immune response of the host by expressing a series of antigenically distinct VSGs from an estimated 1000 VSG genes. In Trypanosoma brucei brucei, this protein is Variant surface glycoprotein ILTAT 1.1BC.